The sequence spans 622 residues: MTFLQVTIKMVAREASGHSYLVACWQPILILMLGTVLSGSATGCPSRCECSAQERSVVCHRRKLITLPEGIPIDTRLLDLSKNRLKAINPEEFLNYPQLEDLQLNENIISVIEPGAFSNLLGLRTLGLRNNNLKLIQLGVFTGLSNLTRLDISENKIVILLDYMFQELYNLKELEVGDNDLVFISHRAFHGLSSLEQLTMERCNLTSVPTEAFSHLHNLLTLKLRHLNVNVIRDFSFRRLYRLKILEIANWPLLESLTAKSLHGLNITTLSITNCNLTAVPYVAIQHLVYLRFFNLSFNPIEVVEGNKMHNLLRLQAFHLVGGRLVSIEPYSFKGLNYLRVLNVSSNSLSTLEESAFHSVGNLETLALHDNPLACDCRLLWVFRRRWRLNFNRQQPSCETPEFLQGKEFKDFPDVLPPNYFTCQKSKIRDHKAIHRFVDEGTTVQFPCQADGDPTPMIMWQSPKKQFITTKSIGRLSVSLDGTLEVRYAQIQDNGTYTCFAVNAGGNDTRLAHLHVHSYSPNWPHQPNKTFAFILNQPSDNSANGTGAMDPFPFDMKTLIIATTMGFISFLGVVLFCLVLLFLWSRGKGNAKPNIEIEYVPRKVDGENSPNEGSHKISMKMI.

The signal sequence occupies residues M1–G43. Intrachain disulfides connect C44-C50 and C48-C59. One can recognise an LRRNT domain in the interval C44–I73. The Extracellular segment spans residues C44–T563. LRR repeat units lie at residues D74–N95, Q98–N119, G122–G143, N146–E167, N170–G191, S194–H215, N218–R239, N266–H287, Y290–N311, R314–G335, and Y338–S359. N146 carries N-linked (GlcNAc...) asparagine glycosylation. N204 is a glycosylation site (N-linked (GlcNAc...) asparagine). N-linked (GlcNAc...) asparagine glycosylation is found at N266, N276, and N295. An N-linked (GlcNAc...) asparagine glycan is attached at N343. The region spanning N371–K425 is the LRRCT domain. Cystine bridges form between C375–C398, C377–C423, and C448–C499. In terms of domain architecture, Ig-like C2-type spans P413–H515. N-linked (GlcNAc...) asparagine glycans are attached at residues N494, N507, N528, and N544. The chain crosses the membrane as a helical span at residues T564–W584. The Cytoplasmic segment spans residues S585–I622.

It is found in the cell membrane. Its function is as follows. May play a role in regulating axonal regeneration and plasticity in the adult central nervous system. The polypeptide is Leucine-rich repeat and immunoglobulin-like domain-containing nogo receptor-interacting protein 1-B (lingo1b) (Danio rerio (Zebrafish)).